The following is a 261-amino-acid chain: 14-3-3 protein 9 (261 aa).

The segment at P239–E261 is disordered.

This sequence belongs to the 14-3-3 family. As to quaternary structure, homodimer.

The sequence is that of 14-3-3 protein 9 (TFT9) from Solanum lycopersicum (Tomato).